Reading from the N-terminus, the 364-residue chain is Aminomethyltransferase (364 aa).

The protein belongs to the GcvT family. As to quaternary structure, the glycine cleavage system is composed of four proteins: P, T, L and H.

It carries out the reaction N(6)-[(R)-S(8)-aminomethyldihydrolipoyl]-L-lysyl-[protein] + (6S)-5,6,7,8-tetrahydrofolate = N(6)-[(R)-dihydrolipoyl]-L-lysyl-[protein] + (6R)-5,10-methylene-5,6,7,8-tetrahydrofolate + NH4(+). The glycine cleavage system catalyzes the degradation of glycine. The polypeptide is Aminomethyltransferase (Salmonella arizonae (strain ATCC BAA-731 / CDC346-86 / RSK2980)).